The primary structure comprises 213 residues: Putative amidate substrates transporter protein (213 aa).

6 helical membrane-spanning segments follow: residues 4–20 (VGLF…GLML), 32–48 (LNFF…TVLI), 56–72 (AVIF…FTYL), 116–132 (VIWL…FLLL), 146–162 (VAVA…AFLI), and 172–188 (LPAA…VVLA).

It belongs to the AmiS/UreI family.

It is found in the cell membrane. Functionally, possible transporter that might be responsible for the adsorption of amidase substrates or release of their hydrolysis products. This Mycolicibacterium smegmatis (Mycobacterium smegmatis) protein is Putative amidate substrates transporter protein.